The sequence spans 195 residues: Probable GTP-binding protein EngB (195 aa).

In terms of domain architecture, EngB-type G spans 22–195; it reads GYPEIALVGR…WKWIEDRMGE (174 aa). GTP contacts are provided by residues 30 to 37, 57 to 61, 75 to 78, 142 to 145, and 173 to 176; these read GRSNVGKS, GKTQT, DVPG, TKSD, and MFSA. Mg(2+)-binding residues include Ser37 and Thr59.

This sequence belongs to the TRAFAC class TrmE-Era-EngA-EngB-Septin-like GTPase superfamily. EngB GTPase family. It depends on Mg(2+) as a cofactor.

Functionally, necessary for normal cell division and for the maintenance of normal septation. This is Probable GTP-binding protein EngB from Pediococcus pentosaceus (strain ATCC 25745 / CCUG 21536 / LMG 10740 / 183-1w).